Consider the following 149-residue polypeptide: MSQTHRILLLNGPNLNMLGAREPKHYGSISLESIEEKIQTLATQHNVKVECFQANSEEKLINKIHESFQQVDFILINPAAYTHTSVALRDALLAVSIPFVEIHLSNVHKREPFRHHSYFSDVAEGVICGLGAKGYEFAFLFAMDYLAKK.

Tyrosine 26 (proton acceptor) is an active-site residue. Residues asparagine 77, histidine 83, and aspartate 90 each coordinate substrate. The Proton donor role is filled by histidine 103. Substrate-binding positions include leucine 104–serine 105 and arginine 114.

This sequence belongs to the type-II 3-dehydroquinase family. As to quaternary structure, homododecamer.

It carries out the reaction 3-dehydroquinate = 3-dehydroshikimate + H2O. The protein operates within metabolic intermediate biosynthesis; chorismate biosynthesis; chorismate from D-erythrose 4-phosphate and phosphoenolpyruvate: step 3/7. Functionally, catalyzes a trans-dehydration via an enolate intermediate. This is 3-dehydroquinate dehydratase from Haemophilus influenzae (strain PittGG).